Consider the following 423-residue polypeptide: MTNKLIIQGGKKLAGTLQVDGAKNSAVALIPAAILAESEVVLEGLPDISDVYTLYDILEELGGSVRYDNKTAVIDPADMISMPLPTGNVKKLRASYYLMGAMLGRFKKAVIGLPGGCYLGPRPIDQHIKGFEALGAKVTNEQGAIYLRADELKGARIYLDVVSVGATINIMLAAVRAKGKTIIENAAKEPEIIDVATLLSNMGAIIKGAGTDTIRITGVEHLHGCHHTIIPDRIEAGTFMVLAAASGKGVRIENVIPTHLEGIIAKMTEMGIPMDIEEDAIFVGEVEKIKKVDIKTYAYPGFPTDLQQPLTALLTRAEGSSVVTDTIYPSRFKHIAEIERMGGKFKLEGRSAVVSGPVKLQGSKVTATDLRAGAALVIAGLLAEGTTEIHGVEHIERGYSKIIEKLSAIGADITRSTAAETKL.

23 to 24 provides a ligand contact to phosphoenolpyruvate; that stretch reads KN. Position 93 (R93) interacts with UDP-N-acetyl-alpha-D-glucosamine. The active-site Proton donor is C117. The residue at position 117 (C117) is a 2-(S-cysteinyl)pyruvic acid O-phosphothioketal. Residues 122-126, D305, and I327 contribute to the UDP-N-acetyl-alpha-D-glucosamine site; that span reads RPIDQ.

This sequence belongs to the EPSP synthase family. MurA subfamily.

The protein localises to the cytoplasm. The enzyme catalyses phosphoenolpyruvate + UDP-N-acetyl-alpha-D-glucosamine = UDP-N-acetyl-3-O-(1-carboxyvinyl)-alpha-D-glucosamine + phosphate. Its pathway is cell wall biogenesis; peptidoglycan biosynthesis. Its function is as follows. Cell wall formation. Adds enolpyruvyl to UDP-N-acetylglucosamine. The polypeptide is UDP-N-acetylglucosamine 1-carboxyvinyltransferase 2 (Listeria innocua serovar 6a (strain ATCC BAA-680 / CLIP 11262)).